The following is a 188-amino-acid chain: Putative manganese efflux pump MntP (188 aa).

6 consecutive transmembrane segments (helical) span residues 2–22 (LYIEVLLLAIGLSMDSLAVSV), 40–60 (IASVLGIFQAGMTVIGYTMGL), 66–86 (ICAFDHWIAFTLLLYLGGKMI), 107–127 (LCGLGIATSIDALAVGISLAI), 133–153 (LLQASTIGVVTFAISAFGVYF), and 167–187 (LIGGLILIGIGTKILIEHLFF).

Belongs to the MntP (TC 9.B.29) family.

It is found in the cell inner membrane. Probably functions as a manganese efflux pump. In Parabacteroides distasonis (strain ATCC 8503 / DSM 20701 / CIP 104284 / JCM 5825 / NCTC 11152), this protein is Putative manganese efflux pump MntP.